A 296-amino-acid chain; its full sequence is UBX domain-containing protein 1-A (296 aa).

Residues 1–42 (MAECSTLESLIEMGFSSTRAEKALTATGNQGIEPAMDWLVEH) enclose the UBA domain. The tract at residues 43–216 (EDDPDIDEPS…VQEPPTKKEY (174 aa)) is disordered. Positions 61–75 (TDTADTTDTTDTTDT) are enriched in low complexity. Composition is skewed to basic and acidic residues over residues 86-100 (PLTE…KRMM), 107-123 (QNER…EQEK), and 138-178 (KMQE…DRAR). The stretch at 87–177 (LTEEEKEKQT…KIARDKADRA (91 aa)) forms a coiled coil. Low complexity predominate over residues 191–206 (PAETSIPATTPSPSSP). A UBX domain is found at 214–293 (KEYDQCRIQV…GLVPTAVLIV (80 aa)).

Its subcellular location is the cytoplasm. Functionally, component of a complex required to couple deglycosylation and proteasome-mediated degradation of misfolded proteins in the endoplasmic reticulum that are retrotranslocated in the cytosol. Involved in ubiquitin-proteasome systems. The sequence is that of UBX domain-containing protein 1-A (ubxn1-a) from Xenopus laevis (African clawed frog).